We begin with the raw amino-acid sequence, 431 residues long: POU domain, class 2, transcription factor 3 (431 aa).

Disordered stretches follow at residues 1–39 (MVNL…RNGL), 130–180 (LLPQ…EPTD), and 248–267 (DAES…YPTL). The region spanning 176 to 250 (DEPTDLEELE…LLEKWLNDAE (75 aa)) is the POU-specific domain. Over residues 251–267 (SSPSDPSASTPSSYPTL) the composition is skewed to low complexity. The homeobox DNA-binding region spans 274–333 (KRKKRTSIETNIRLTLEKRFQDNPKPSSEEISMIAEQLSMEKEVVRVWFCNRRQKEKRIN). Low complexity-rich tracts occupy residues 352–364 (PSGS…VPPV), 374–390 (SSCS…PGSG), and 398–419 (ASQN…NSSG). Positions 352–419 (PSGSLGPLSV…SSSSSFNSSG (68 aa)) are disordered.

Belongs to the POU transcription factor family. Class-2 subfamily. In terms of assembly, interacts (via the POU domain) with POU2AF1 and POU2AF2 in a DNA-dependent manner; this interaction recruits POU2AF2 to chromatin and increases POU2F3 transactivation activity. Skin, thymus, stomach and testis.

The protein localises to the nucleus. Transcription factor that binds to the octamer motif (5'-ATTTGCAT-3'). Regulates cell type-specific differentiation pathways. Involved in the regulation of keratinocytes differentiation. The POU2F3-POU2AF2/POU2AF3 complex drives the expression of tuft-cell-specific genes, a rare chemosensory cells that coordinate immune and neural functions within mucosal epithelial tissues. This is POU domain, class 2, transcription factor 3 (Pou2f3) from Mus musculus (Mouse).